We begin with the raw amino-acid sequence, 302 residues long: Gigasin-6 (302 aa).

Positions 1-22 (MSSRNLLYSSVVLFLVLFYCHG) are cleaved as a signal peptide. The chain crosses the membrane as a helical span at residues 75–95 (ITTDTLFGLGGISALFANILI).

In terms of tissue distribution, component of the organic matrix of calcified shell layers.

It is found in the membrane. The protein is Gigasin-6 of Magallana gigas (Pacific oyster).